A 619-amino-acid polypeptide reads, in one-letter code: Lysophospholipid acyltransferase (619 aa).

The Lumenal segment spans residues 1-19 (MYNPVDAVLTKIITNYGID). The chain crosses the membrane as a helical span at residues 20-39 (SFTLRYAICLLGSFPLNAIL). The Cytoplasmic portion of the chain corresponds to 40–51 (KRIPEKRIGLKC). The helical transmembrane segment at 52 to 72 (CFIISMSMFYLFGVLNLVSGF) threads the bilayer. Residues 73–92 (RTLFISTMFTYLISRFYRSK) are Lumenal-facing. Residues 93-113 (FMPHLNFMFVMGHLAINHIHA) traverse the membrane as a helical segment. Residues 114-231 (QFLNEQTQTT…GERRQIPKNG (118 aa)) lie on the Cytoplasmic side of the membrane. The Nucleophile role is filled by D146. The helical transmembrane segment at 232–252 (KLALWKVVQGLAWMILSTLGM) threads the bilayer. Topologically, residues 253 to 274 (KHFPVKYVLDKDGFPTRSFIFR) are lumenal. The chain crosses the membrane as a helical span at residues 275–295 (IHYLFLLGFIHRFKYYAAWTI). The Cytoplasmic segment spans residues 296–429 (SEGSCILCGL…TPLPSKKIYD (134 aa)). Catalysis depends on E297, which acts as the Nucleophile. The active site involves H382. The helical transmembrane segment at 430 to 450 (LVGIYAIKLAFGYMVQPFIIL) threads the bilayer. The Lumenal segment spans residues 451 to 456 (DLKPSL). Residues 457–477 (MVWGSVYFYVHIIVAFSFFLF) form a helical membrane-spanning segment. The Cytoplasmic portion of the chain corresponds to 478–619 (RGPYAKQVTE…SPKPISKKEE (142 aa)). The residue at position 513 (S513) is a Phosphoserine. Residues 545–593 (ELEKWDNAKEDWEDFCKDYKEWRNKNGLEIEEENLSKAFERFKQEFSNA) are a coiled coil. Residues 592 to 619 (NAASGSGERVRKMSFSGYSPKPISKKEE) are disordered. Phosphoserine is present on residues S605, S610, and S615.

This sequence belongs to the membrane-bound acyltransferase family.

The protein localises to the endoplasmic reticulum membrane. The enzyme catalyses a 1-acyl-sn-glycero-3-phosphate + an acyl-CoA = a 1,2-diacyl-sn-glycero-3-phosphate + CoA. It catalyses the reaction a 1-acyl-sn-glycero-3-phosphocholine + an acyl-CoA = a 1,2-diacyl-sn-glycero-3-phosphocholine + CoA. The catalysed reaction is 1-acyl-sn-glycero-3-phospho-(1'-sn-glycerol) + an acyl-CoA = a 1,2-diacyl-sn-glycero-3-phospho-(1'-sn-glycerol) + CoA. It carries out the reaction a 1-acyl-sn-glycero-3-phospho-(1D-myo-inositol) + an acyl-CoA = a 1,2-diacyl-sn-glycero-3-phospho-(1D-myo-inositol) + CoA. The enzyme catalyses a 1-acyl-sn-glycero-3-phospho-L-serine + an acyl-CoA = a 1,2-diacyl-sn-glycero-3-phospho-L-serine + CoA. It catalyses the reaction a 1-acyl-sn-glycero-3-phosphoethanolamine + an acyl-CoA = a 1,2-diacyl-sn-glycero-3-phosphoethanolamine + CoA. The catalysed reaction is 1-(9Z-octadecenoyl)-sn-glycero-3-phosphoethanolamine + (9Z)-octadecenoyl-CoA = 1,2-di-(9Z-octadecenoyl)-sn-glycero-3-phosphoethanolamine + CoA. It carries out the reaction 1-(9Z-octadecenoyl)-sn-glycero-3-phosphoethanolamine + (9Z)-hexadecenoyl-CoA = 1-(9Z)-octadecenoyl-2-(9Z)-hexadecenoyl-sn-glycero-3-phosphoethanolamine + CoA. The enzyme catalyses 1-(9Z-octadecenoyl)-sn-glycero-3-phosphoethanolamine + hexadecanoyl-CoA = 1-(9Z-octadecenoyl)-2-hexadecanoyl-sn-glycero-3-phosphoethanolamine + CoA. It catalyses the reaction 1-(9Z-octadecenoyl)-sn-glycero-3-phosphoethanolamine + tetradecanoyl-CoA = 1-(9Z)-octadecenoyl-2-tetradecanoyl-sn-glycero-3-phosphoethanolamine + CoA. The catalysed reaction is 1-(9Z-octadecenoyl)-sn-glycero-3-phosphate + (9Z)-octadecenoyl-CoA = 1,2-di-(9Z-octadecenoyl)-sn-glycero-3-phosphate + CoA. It carries out the reaction (9Z)-hexadecenoyl-CoA + 1-hexadecanoyl-sn-glycero-3-phosphocholine = 1-hexadecanoyl-2-(9Z-hexadecenoyl)-sn-glycero-3-phosphocholine + CoA. The enzyme catalyses 1-hexadecanoyl-sn-glycero-3-phosphocholine + (9Z)-octadecenoyl-CoA = 1-hexadecanoyl-2-(9Z-octadecenoyl)-sn-glycero-3-phosphocholine + CoA. It catalyses the reaction 1-tetradecanoyl-sn-glycero-3-phosphoethanolamine + (9Z)-octadecenoyl-CoA = 1-tetradecanoyl-2-(9Z-octadecenoyl)-sn-glycero-3-phosphoethanolamine + CoA. The catalysed reaction is 1-(9Z-octadecenoyl)-sn-glycero-3-phospho-L-serine + (9Z)-octadecenoyl-CoA = 1,2-di-(9Z)-octadecenoyl-sn-glycero-3-phospho-L-serine + CoA. It carries out the reaction a 1-acyl-sn-glycero-3-phospho-(1D-myo-inositol) + (9Z)-octadecenoyl-CoA = a 1-acyl-2-(9Z-octadecenoyl)-sn-glycero-3-phospho-(1D-myo-inositol) + CoA. The protein operates within lipid metabolism; phospholipid metabolism. Broad specificity membrane-bound O-acyltransferase that mediates the incorporation of unsaturated acyl chains into the sn-2 position of various lysophospholipids. Preferentially acylates lysophosphocholine (LPC), but also lysophosphoethanolamine (LPE), lysophosphatidylglycerol (LPG), lysophosphatidic acid (LPA), lysophosphoethanolamine (LPE), lysophosphoinositol (LPI), and lysophosphoserine (LPS). Prefers an acyl residue to an alkyl residue at the sn-1 position of lysophospholipid acceptors. Accepts acyl chains in acyl-CoA from C-2 to C-20, and shows strong preference for unsaturated acyl-CoAs with 16-20 carbons. Together with SLC1, plays a central role in phosphatidic acid (PA) biosynthesis. PA is the intermediate, from which all glycerophospholipids are synthesized. Can also introduce an acyl chain at the sn-1 position of the lysophosphatidylcholine analog 1-hydroxy-2-hexadecyl-sn-glycero-3-phosphocholine (HHPC). This Saccharomyces cerevisiae (strain ATCC 204508 / S288c) (Baker's yeast) protein is Lysophospholipid acyltransferase.